Reading from the N-terminus, the 316-residue chain is Methionyl-tRNA formyltransferase (316 aa).

109–112 contributes to the (6S)-5,6,7,8-tetrahydrofolate binding site; that stretch reads SLLP.

The protein belongs to the Fmt family.

The catalysed reaction is L-methionyl-tRNA(fMet) + (6R)-10-formyltetrahydrofolate = N-formyl-L-methionyl-tRNA(fMet) + (6S)-5,6,7,8-tetrahydrofolate + H(+). Attaches a formyl group to the free amino group of methionyl-tRNA(fMet). The formyl group appears to play a dual role in the initiator identity of N-formylmethionyl-tRNA by promoting its recognition by IF2 and preventing the misappropriation of this tRNA by the elongation apparatus. The chain is Methionyl-tRNA formyltransferase from Idiomarina loihiensis (strain ATCC BAA-735 / DSM 15497 / L2-TR).